Reading from the N-terminus, the 215-residue chain is MENPVRINTLYNVFVERYIENLSIYSIPINSTCGIHIGEIKGTFKRCFLKILNMCINDKELSFNILIKTLKDVTSTLSQKEKEELSKEIGIDILNNDPKYVPEIIRNCSSSADVTNIIDIQTLDVGKCIAPYDKQILLQIVNSGTAEANCVMNSIMNSMNRRYIDNANIYNYLNLTNRPWFIFSIIIIAIIFVIGICSIKRRIGIKYKYGTFLYV.

3 disulfide bridges follow: cysteine 33-cysteine 55, cysteine 47-cysteine 128, and cysteine 108-cysteine 150. Residues 179 to 199 (PWFIFSIIIIAIIFVIGICSI) form a helical membrane-spanning segment.

It belongs to the orthopoxvirus OPG053 family. Component of the entry fusion complex (EFC) composed of OPG053, OPG076, OPG086, OPG094, OPG095, OPG099, OPG107, OPG143, OPG104, OPG147 and OPG155. Except for OPG095 and OPG052, each of the EFC proteins is required for assembly or stability of the complex. In terms of processing, disulfid bonds are oxidized in the cytoplasm by OPG088 protein. Unglycosylated because produced in viral factories instead of the classic ER -Golgi route.

It is found in the virion membrane. Its function is as follows. Component of the entry fusion complex (EFC), which consists of 11 proteins. During cell infection, this complex mediates entry of the virion core into the host cytoplasm by a two-step mechanism consisting of lipid mixing of the viral and cellular membranes and subsequent pore formation. In Sus scrofa (Pig), this protein is EFC-associated protein OPG053 (OPG053).